The sequence spans 183 residues: Capsid protein (183 aa).

Residues 136-183 form a disordered region; sequence NAPILSTLPETTVVRRRGRSPRRRTPSPRRRRSQSPRRRRSQSRESQC. A compositionally biased stretch (basic residues) spans 149 to 176; the sequence is VRRRGRSPRRRTPSPRRRRSQSPRRRRS. Phosphoserine; by host occurs at positions 155, 162, and 170. Residues 155 to 161 form a 1; half-length repeat; it reads SPRRRTP. The tract at residues 155–177 is 3 X 8 AA repeats of S-P-R-R-R-[PR]-S-Q; that stretch reads SPRRRTPSPRRRRSQSPRRRRSQ. The short motif at 158 to 175 is the Bipartite nuclear localization signal element; it reads RRTPSPRRRRSQSPRRRR. A run of 2 repeats spans residues 162-169 and 170-177. Residues 177–183 form an RNA binding region; that stretch reads QSRESQC.

Belongs to the orthohepadnavirus core antigen family. In terms of assembly, homodimerizes, then multimerizes. Interacts with cytosol exposed regions of viral L glycoprotein present in the reticulum-to-Golgi compartment. Interacts with human FLNB. Phosphorylated form interacts with host importin alpha; this interaction depends on the exposure of the NLS, which itself depends upon genome maturation and/or phosphorylation of the capsid protein. Interacts with host NUP153. Phosphorylated by host SRPK1, SRPK2, and maybe protein kinase C or GAPDH. Phosphorylation is critical for pregenomic RNA packaging. Protein kinase C phosphorylation is stimulated by HBx protein and may play a role in transport of the viral genome to the nucleus at the late step during the viral replication cycle.

The protein localises to the virion. It localises to the host cytoplasm. In terms of biological role, self assembles to form an icosahedral capsid. Most capsids appear to be large particles with an icosahedral symmetry of T=4 and consist of 240 copies of capsid protein, though a fraction forms smaller T=3 particles consisting of 180 capsid proteins. Entering capsids are transported along microtubules to the nucleus. Phosphorylation of the capsid is thought to induce exposure of nuclear localization signal in the C-terminal portion of the capsid protein that allows binding to the nuclear pore complex via the importin (karyopherin-) alpha and beta. Capsids are imported in intact form through the nuclear pore into the nuclear basket, where it probably binds NUP153. Only capsids that contain the mature viral genome can release the viral DNA and capsid protein into the nucleoplasm. Immature capsids get stuck in the basket. Capsids encapsulate the pre-genomic RNA and the P protein. Pre-genomic RNA is reverse-transcribed into DNA while the capsid is still in the cytoplasm. The capsid can then either be directed to the nucleus, providing more genomes for transcription, or bud through the endoplasmic reticulum to provide new virions. This is Capsid protein from Hepatitis B virus genotype B2 (isolate Indonesia/pIDW420/1988) (HBV-B).